A 258-amino-acid polypeptide reads, in one-letter code: Neurotrophin-3 (258 aa).

A signal peptide spans 1–18 (MSILFYVIFLAYLRGIQG). Positions 19-139 (NSMDQRSLPE…ANRTSPRRKR (121 aa)) are excised as a propeptide. The segment at 60 to 85 (QSTLPKAEAPREPEQGEATRSEFQPM) is disordered. Positions 67–79 (EAPREPEQGEATR) are enriched in basic and acidic residues. Asparagine 131 carries N-linked (GlcNAc...) asparagine glycosylation. 3 cysteine pairs are disulfide-bonded: cysteine 153/cysteine 218, cysteine 196/cysteine 247, and cysteine 206/cysteine 249.

It belongs to the NGF-beta family. As to expression, brain and peripheral tissues.

The protein resides in the secreted. Seems to promote the survival of visceral and proprioceptive sensory neurons. The sequence is that of Neurotrophin-3 (Ntf3) from Mus musculus (Mouse).